A 518-amino-acid chain; its full sequence is E3 ubiquitin-protein ligase TRIM39 (518 aa).

Residues 29 to 70 form an RING-type zinc finger; that stretch reads CSVCLEYLKEPVIIECGHNFCKACITRWWEDLERDFPCPVCR. The B box-type zinc-finger motif lies at 102–143; that stretch reads RDESLCPQHHEALSLFCYEDQEAVCLICAISHTHRAHTVVPL. Residues Cys107, His110, Cys129, and His135 each coordinate Zn(2+). A coiled-coil region spans residues 181–250; that stretch reads ELKRLVESRR…AHLAAEVEGK (70 aa). Interaction with CDKN1A regions lie at residues 268-337 and 389-518; these read KNIP…QLIA and TSGR…TDWE. Residues 319-514 form the B30.2/SPRY domain; sequence SNFPRQYFAL…NAAPLTIRPP (196 aa).

This sequence belongs to the TRIM/RBCC family. As to quaternary structure, isoform 1 interacts with MOAP1. Isoform 1 and isoform 2 interact with CDKN1A. Isoform 2 interacts (via domain B box-type) with CACTIN. Autoubiquitinated. Ubiquitous; highly expressed in brain, heart, kidney, liver, skeletal muscle, spleen and testis.

The protein resides in the cytoplasm. It localises to the cytosol. Its subcellular location is the mitochondrion. The protein localises to the nucleus. It catalyses the reaction S-ubiquitinyl-[E2 ubiquitin-conjugating enzyme]-L-cysteine + [acceptor protein]-L-lysine = [E2 ubiquitin-conjugating enzyme]-L-cysteine + N(6)-ubiquitinyl-[acceptor protein]-L-lysine.. Its pathway is protein modification; protein ubiquitination. Functionally, E3 ubiquitin-protein ligase. May facilitate apoptosis by inhibiting APC/C-Cdh1-mediated poly-ubiquitination and subsequent proteasome-mediated degradation of the pro-apoptotic protein MOAP1. Regulates the G1/S transition of the cell cycle and DNA damage-induced G2 arrest by stabilizing CDKN1A/p21. Positively regulates CDKN1A/p21 stability by competing with DTL for CDKN1A/p21 binding, therefore disrupting DCX(DTL) E3 ubiquitin ligase complex-mediated CDKN1A/p21 ubiquitination and degradation. In terms of biological role, regulates the G1/S transition of the cell cycle and DNA damage-induced G2 arrest by stabilizing CDKN1A/p21. Positively regulates CDKN1A/p21 stability by competing with DTL for CDKN1A/p21 binding, therefore disrupting DCX(DTL) E3 ubiquitin ligase complex-mediated CDKN1A/p21 ubiquitination and degradation. Negatively regulates the canonical NF-kappa-B signaling pathway via stabilization of CACTIN in an ubiquitination-independent manner. The polypeptide is E3 ubiquitin-protein ligase TRIM39 (TRIM39) (Homo sapiens (Human)).